The following is a 355-amino-acid chain: Guanine nucleotide-binding protein G(i) subunit alpha-2 (355 aa).

Gly2 is lipidated: N-myristoyl glycine. The S-palmitoyl cysteine moiety is linked to residue Cys3. The G-alpha domain maps to 32–355 (REVKLLLLGA…KNNLKDCGLF (324 aa)). Residues 35 to 48 (KLLLLGAGESGKST) form a G1 motif region. Residues 40-47 (GAGESGKS), 176-182 (LRTRVKT), 201-205 (DVGGQ), 270-273 (NKKD), and Ala327 contribute to the GTP site. 2 residues coordinate Mg(2+): Ser47 and Thr182. A G2 motif region spans residues 174–182 (DVLRTRVKT). A G3 motif region spans residues 197–206 (FKMFDVGGQR). A G4 motif region spans residues 266 to 273 (ILFLNKKD). Positions 325 to 330 (TCATDT) are G5 motif.

The protein belongs to the G-alpha family. G(i/o/t/z) subfamily. G proteins are composed of 3 units; alpha, beta and gamma. The alpha chain contains the guanine nucleotide binding site. In this context, interacts with GNB2. Interacts with UNC5B. Interacts with GPSM1. Interacts with RGS12 and RGS14. Interacts (inactive GDP-bound form) with NUCB1 (via GBA motif); the interaction leads to activation of GNAI3. Interacts (inactive GDP-bound form) with CCDC88C/DAPLE (via GBA motif). Interacts (inactive GDP-bound form) with CCDC8A/GIV (via GBA motif). Interacts with CXCR1 and CXCR2.

It is found in the cytoplasm. The protein localises to the cytoskeleton. The protein resides in the microtubule organizing center. Its subcellular location is the centrosome. It localises to the cell membrane. It is found in the membrane. Guanine nucleotide-binding proteins (G proteins) are involved as modulators or transducers in various transmembrane signaling systems. The G(i) proteins are involved in hormonal regulation of adenylate cyclase: they inhibit the cyclase in response to beta-adrenergic stimuli. May play a role in cell division. The protein is Guanine nucleotide-binding protein G(i) subunit alpha-2 (Gnai2) of Mus musculus (Mouse).